The primary structure comprises 84 residues: Beta-defensin 119 (84 aa).

The first 21 residues, 1 to 21 (MKLLYLFLAILLVIEEPVISG), serve as a signal peptide directing secretion. 3 disulfide bridges follow: Cys-28-Cys-55, Cys-35-Cys-49, and Cys-39-Cys-56.

It belongs to the beta-defensin family.

The protein localises to the secreted. Has antibacterial activity. The sequence is that of Beta-defensin 119 (DEFB119) from Pongo pygmaeus (Bornean orangutan).